The following is a 242-amino-acid chain: Probable inactive serine protease 58 (242 aa).

Positions 1–17 (MNLILLWALLNLPVALT) are cleaved as a signal peptide. In terms of domain architecture, Peptidase S1 spans 18-240 (FDPNYKDDIT…YIPWIENTIQ (223 aa)). 4 disulfide bridges follow: Cys41/Cys57, Cys134/Cys202, Cys166/Cys181, and Cys192/Cys216. N-linked (GlcNAc...) asparagine glycosylation is present at Asn157.

Belongs to the peptidase S1 family.

It localises to the secreted. This chain is Probable inactive serine protease 58 (PRSS58), found in Bos taurus (Bovine).